The chain runs to 102 residues: Protein B1 (102 aa).

A disordered region spans residues 1 to 102 (MLNDAKQTRA…AQPQPSNNRK (102 aa)). Composition is skewed to polar residues over residues 8 to 17 (TRANPGTSRP) and 51 to 65 (GKTN…TAGE). Positions 75–88 (KGPRGGKTNTRRTP) are enriched in basic residues.

Functionally, not known. Encoded on a subgenomic RNA (RNA3) synthesized during replication and which is co-terminal with RNA1. This chain is Protein B1 (B1), found in Black beetle virus (BBV).